The following is a 588-amino-acid chain: MIQHPRIGIRPTIDGRRQGVRESLEVQTMNMAKSVADLISSTLKYPDGEPVECVISPSTIGRVPEAAASHELFKKSNVCATITVTPCWCYGSETMDMSPDIPHAIWGFNGTERPGAVYLAAVLASHAQKGIPAFGIYGRDVQEANDTDIPEDVKEKLLRYARAALATGLMRDTAYLSMGSVSMGIGGSIVNPDFFQEYLGMRNESVDMTEFTRRMDRGIYDPEEFERAMVWVKEHIKEGVDRNREDLILSKEEKEKQWEFVIKMFMIGRDLMVGNPRLAELGFEEEAVGHHALVAGFQGQRQWTDHFPNGDFMETFLNTQFDWNGIRKPFVFATENDSLNGVSMLFNYLLTNTPQIFADVRTYWSPEAVERVTGYTLEGRAAAGFLHLINSGSCTLDGTGQATRDGKPVMKPFWELDESEVQAMLENTDFPPANREYFRGGGFSTRFLTKGDMPVTMVRLNLLKGVGPVLQIAEGYTLELPEDVHHTLDNRTDSGWPTTWFAPRLTGKGAFKSVYDVMNNWGANHGAITYGHIGADLITLASMLRIPVNMHNVPEEDIFRPKNWSLFGTEDLESADYRACQLLGPLHK.

Catalysis depends on proton acceptor residues glutamate 335 and aspartate 359. Residues glutamate 335, aspartate 359, and histidine 525 each contribute to the Mn(2+) site.

Belongs to the L-fucose isomerase family. It depends on Mn(2+) as a cofactor.

It localises to the cytoplasm. The catalysed reaction is L-fucose = L-fuculose. It participates in carbohydrate degradation; L-fucose degradation; L-lactaldehyde and glycerone phosphate from L-fucose: step 1/3. Its function is as follows. Converts the aldose L-fucose into the corresponding ketose L-fuculose. The sequence is that of L-fucose isomerase from Streptococcus pneumoniae (strain JJA).